A 266-amino-acid chain; its full sequence is Glutamate racemase (266 aa).

Substrate contacts are provided by residues 9–10 (DS) and 41–42 (YG). Cys72 functions as the Proton donor/acceptor in the catalytic mechanism. 73–74 (NT) contacts substrate. Cys183 acts as the Proton donor/acceptor in catalysis. Residue 184 to 185 (TH) participates in substrate binding.

The protein belongs to the aspartate/glutamate racemases family.

It catalyses the reaction L-glutamate = D-glutamate. It functions in the pathway cell wall biogenesis; peptidoglycan biosynthesis. Provides the (R)-glutamate required for cell wall biosynthesis. The polypeptide is Glutamate racemase (Listeria innocua serovar 6a (strain ATCC BAA-680 / CLIP 11262)).